Here is a 206-residue protein sequence, read N- to C-terminus: MSYTLPSLPYAYDALEPHFDKQTMEIHHTKHHQTYVNNANAALENLPEFASLPVEELITKLDQVPADKKTVLRNNAGGHANHSLFWKGLKKGTTLQGDLKAAIERDFGSVDNFKAEFEKAAATRFGSGWAWLVLKGDKLAVVSTANQDSPLMGEAISGASGFPILGLDVWEHAYYLKFQNRRPDYIKEFWNVVNWDEAAARFAAKK.

Histidine 27, histidine 82, aspartate 168, and histidine 172 together coordinate Mn(2+).

It belongs to the iron/manganese superoxide dismutase family. As to quaternary structure, homodimer. Mn(2+) is required as a cofactor.

It carries out the reaction 2 superoxide + 2 H(+) = H2O2 + O2. Functionally, destroys superoxide anion radicals which are normally produced within the cells and which are toxic to biological systems. The polypeptide is Superoxide dismutase [Mn] (sodA) (Salmonella typhimurium (strain LT2 / SGSC1412 / ATCC 700720)).